Consider the following 401-residue polypeptide: MSVELLPHSTEPHANGADKSVSAAARVTQSLKKQQVFDAEQVKLQSATDELKSAQMFAPQTPITAIDDVVDEALAAHPQALDVESIRPKLHQSRRWSWLARLSLMALLLLTLVQTVLGLRDAWLESPWLFSFYGAVLGIVGSWAIVGVIGEYRKLKRLKQVADTQETGARLALSMQMGEADGFIDNIVRHYPDSQGLQRLRHSLKDEHNDAEKVLLFEDLVLTERDELAKKIVRRYAAESAVLLAASPLAVLDMAIILWRNQRMLRDVAACYGIELGYWSRIKLIRSIVINIIYAGTSELVTDLGTQLLSVEMTGKLSARLAQGLGGGLLTARLGYQAMALCRPIRFKDEQRPKLTKVHQELLMELKQFAGNLLTKDGRDALKTQLEGTEVNTSSKEKSLS.

The segment at Met1–Ser22 is disordered. 3 consecutive transmembrane segments (helical) span residues Leu99 to Leu119, Leu129 to Ile149, and Glu239 to Trp259.

Belongs to the UPF0283 family.

It localises to the cell inner membrane. The chain is UPF0283 membrane protein SO_1811 from Shewanella oneidensis (strain ATCC 700550 / JCM 31522 / CIP 106686 / LMG 19005 / NCIMB 14063 / MR-1).